We begin with the raw amino-acid sequence, 179 residues long: Adenine phosphoribosyltransferase (179 aa).

Belongs to the purine/pyrimidine phosphoribosyltransferase family. Homodimer.

The protein localises to the cytoplasm. It catalyses the reaction AMP + diphosphate = 5-phospho-alpha-D-ribose 1-diphosphate + adenine. Its pathway is purine metabolism; AMP biosynthesis via salvage pathway; AMP from adenine: step 1/1. In terms of biological role, catalyzes a salvage reaction resulting in the formation of AMP, that is energically less costly than de novo synthesis. The chain is Adenine phosphoribosyltransferase from Helicobacter pylori (strain HPAG1).